The primary structure comprises 204 residues: UPF0637 protein SAR1080 (204 aa).

Belongs to the UPF0637 family.

In Staphylococcus aureus (strain MRSA252), this protein is UPF0637 protein SAR1080.